Here is a 367-residue protein sequence, read N- to C-terminus: Gibberellin 20 oxidase 3 (367 aa).

The Fe2OG dioxygenase domain occupies 198-304 (DGDPVMRLNH…RRSLTFFLNP (107 aa)). Position 208 (Tyr-208) interacts with 2-oxoglutarate. The Fe cation site is built by His-223, Asp-225, and His-285. Arg-295 and Ser-297 together coordinate 2-oxoglutarate.

This sequence belongs to the iron/ascorbate-dependent oxidoreductase family. Requires Fe(2+) as cofactor. The cofactor is L-ascorbate.

It carries out the reaction gibberellin A12 + 2 2-oxoglutarate + 3 O2 + H(+) = gibberellin A9 + 2 succinate + 3 CO2 + 2 H2O. The enzyme catalyses gibberellin A53 + 2 2-oxoglutarate + 3 O2 + H(+) = gibberellin A20 + 2 succinate + 3 CO2 + 2 H2O. Its function is as follows. Key oxidase enzyme in the biosynthesis of gibberellin. Catalyzes the formation of bioactive gibberellins (GAs) via a three-step oxidation at C-20 of the GA skeleton. Controls the elongation of the vegetative shoot and plant height by the regulation of active gibberellin levels. This chain is Gibberellin 20 oxidase 3, found in Oryza sativa subsp. japonica (Rice).